Reading from the N-terminus, the 68-residue chain is ATP synthase protein 8 (68 aa).

Residues 8-24 (TWLTIITPTLLALFLIT) form a helical membrane-spanning segment. Position 54 is an N6-acetyllysine; alternate (Lys54). The residue at position 54 (Lys54) is an N6-succinyllysine; alternate. Lys57 is subject to N6-acetyllysine.

It belongs to the ATPase protein 8 family. F-type ATPases have 2 components, CF(1) - the catalytic core - and CF(0) - the membrane proton channel. Component of an ATP synthase complex composed of ATP5PB, ATP5MC1, ATP5F1E, ATP5PD, ATP5ME, ATP5PF, ATP5MF, MT-ATP6, MT-ATP8, ATP5F1A, ATP5F1B, ATP5F1D, ATP5F1C, ATP5PO, ATP5MG, ATP5MK and ATP5MJ. Interacts with PRICKLE3.

The protein resides in the mitochondrion membrane. In terms of biological role, mitochondrial membrane ATP synthase (F(1)F(0) ATP synthase or Complex V) produces ATP from ADP in the presence of a proton gradient across the membrane which is generated by electron transport complexes of the respiratory chain. F-type ATPases consist of two structural domains, F(1) - containing the extramembraneous catalytic core and F(0) - containing the membrane proton channel, linked together by a central stalk and a peripheral stalk. During catalysis, ATP synthesis in the catalytic domain of F(1) is coupled via a rotary mechanism of the central stalk subunits to proton translocation. Part of the complex F(0) domain. Minor subunit located with subunit a in the membrane. This Pongo pygmaeus (Bornean orangutan) protein is ATP synthase protein 8 (MT-ATP8).